The primary structure comprises 462 residues: ATP synthase subunit beta (462 aa).

151 to 158 (GGAGVGKT) is an ATP binding site.

The protein belongs to the ATPase alpha/beta chains family. F-type ATPases have 2 components, CF(1) - the catalytic core - and CF(0) - the membrane proton channel. CF(1) has five subunits: alpha(3), beta(3), gamma(1), delta(1), epsilon(1). CF(0) has four main subunits: a(1), b(1), b'(1) and c(9-12).

It localises to the cell inner membrane. It carries out the reaction ATP + H2O + 4 H(+)(in) = ADP + phosphate + 5 H(+)(out). Functionally, produces ATP from ADP in the presence of a proton gradient across the membrane. The catalytic sites are hosted primarily by the beta subunits. The protein is ATP synthase subunit beta of Chlorobium phaeobacteroides (strain DSM 266 / SMG 266 / 2430).